The following is a 328-amino-acid chain: Helicase VP6-A (328 aa).

Disordered regions lie at residues Asp31–Asn128 and Val180–Ile237. 3 stretches are compositionally biased toward basic and acidic residues: residues Glu36–Asn61, Ala71–Ile83, and Pro96–Gly109. Residue Lys110 coordinates ATP. Positions Lys110–Asn128 are enriched in gly residues. Basic and acidic residues-rich tracts occupy residues Val180–Arg205 and Pro214–Glu230.

Belongs to the orbivirus VP6 family. In terms of assembly, homohexamer.

Its subcellular location is the virion. It carries out the reaction ATP + H2O = ADP + phosphate + H(+). Functionally, ATP dependent RNA helicase essential for RNA packaging and viral transcription. Possesses ss- and dsRNA-binding capacity. The chain is Helicase VP6-A (Segment-9) from Bluetongue virus 1 (isolate South Africa) (BTV 1).